Consider the following 62-residue polypeptide: UPF0434 protein azo1471 (62 aa).

Belongs to the UPF0434 family.

This is UPF0434 protein azo1471 from Azoarcus sp. (strain BH72).